The chain runs to 29 residues: Sarcolamban B (29 aa).

A helical membrane pass occupies residues 7-27; it reads LFTTFLILAFLLFLLYAFYEA.

As to quaternary structure, interacts with SERCA. As to expression, strongly expressed in embryonic and larval somatic muscles and postembryonic heart.

The protein localises to the sarcoplasmic reticulum membrane. Plays an essential role in the regulation of calcium transport at the sarcoplasmic reticulum (SR), which is secondarily required for regular muscle contraction. This is Sarcolamban B from Drosophila melanogaster (Fruit fly).